The sequence spans 180 residues: Molybdopterin synthase catalytic subunit (180 aa).

Polar residues predominate over residues 1 to 10 (MSSTTPTTEP). A disordered region spans residues 1–31 (MSSTTPTTEPDQLPPHLDPQTYPRTTTNPTL). Low complexity predominate over residues 21 to 31 (TYPRTTTNPTL). Substrate contacts are provided by residues 131 to 132 (HR), Lys147, and 154 to 156 (KKE).

This sequence belongs to the MoaE family. MOCS2B subfamily. As to quaternary structure, heterotetramer; composed of 2 small (MOCS2A) and 2 large (MOCS2B) subunits.

It localises to the cytoplasm. The catalysed reaction is 2 [molybdopterin-synthase sulfur-carrier protein]-C-terminal-Gly-aminoethanethioate + cyclic pyranopterin phosphate + H2O = molybdopterin + 2 [molybdopterin-synthase sulfur-carrier protein]-C-terminal Gly-Gly + 2 H(+). It functions in the pathway cofactor biosynthesis; molybdopterin biosynthesis. Catalytic subunit of the molybdopterin synthase complex, a complex that catalyzes the conversion of precursor Z into molybdopterin. Acts by mediating the incorporation of 2 sulfur atoms from thiocarboxylated MOCS2A into precursor Z to generate a dithiolene group. The protein is Molybdopterin synthase catalytic subunit of Aspergillus niger (strain ATCC MYA-4892 / CBS 513.88 / FGSC A1513).